Here is a 903-residue protein sequence, read N- to C-terminus: Dual 3',5'-cyclic-AMP and -GMP phosphodiesterase 11A (903 aa).

2 GAF domains span residues 175–324 (DLTS…GIAI) and 356–512 (DLEK…GLGI). Residue Ser-378 coordinates 3',5'-cyclic GMP. One can recognise a PDEase domain in the interval 542–866 (SKTEVDKFKA…VKWEELDKKR (325 aa)). His-618 acts as the Proton donor in catalysis. Positions 622, 658, 659, and 770 each coordinate a divalent metal cation. The segment at 863–903 (DKKRQHDHGASVPASPCSAAEGSETGGVPCCSNNTPPTHVS) is disordered. A compositionally biased stretch (polar residues) spans 893–903 (CSNNTPPTHVS).

The protein belongs to the cyclic nucleotide phosphodiesterase family. It depends on a divalent metal cation as a cofactor.

The protein localises to the cytoplasm. It is found in the cytosol. It catalyses the reaction 3',5'-cyclic GMP + H2O = GMP + H(+). The enzyme catalyses 3',5'-cyclic AMP + H2O = AMP + H(+). Functionally, plays a role in signal transduction by regulating the intracellular concentration of cyclic nucleotides cAMP and cGMP. Catalyzes the hydrolysis of both cAMP and cGMP to 5'-AMP and 5'-GMP, respectively. In Takifugu rubripes (Japanese pufferfish), this protein is Dual 3',5'-cyclic-AMP and -GMP phosphodiesterase 11A (pde11a).